A 230-amino-acid chain; its full sequence is RING finger protein 141 (230 aa).

Residue glycine 2 is the site of N-myristoyl glycine attachment. Residues 155–192 (CCICMDGRADLILPCAHSFCQKCIDKWSDRHRNCPICR) form an RING-type zinc finger.

In terms of tissue distribution, isoform 1 is testis-specific. Isoform 2 is expressed in heart, brain, skeletal muscle, kidney, pancreas, lung, liver and testis. Isoform 3 is expressed in heart, liver, and kidney.

It localises to the membrane. In terms of biological role, may be involved in spermatogenesis. The chain is RING finger protein 141 (Rnf141) from Mus musculus (Mouse).